Reading from the N-terminus, the 520-residue chain is Peptide chain release factor 3 (520 aa).

The region spanning 8–277 is the tr-type G domain; sequence ESRKTFAIIS…FAPMPNARQT (270 aa). GTP-binding positions include 17-24, 85-89, and 139-142; these read SHPDAGKT, DTPGH, and NKLD.

The protein belongs to the TRAFAC class translation factor GTPase superfamily. Classic translation factor GTPase family. PrfC subfamily.

Its subcellular location is the cytoplasm. Its function is as follows. Increases the formation of ribosomal termination complexes and stimulates activities of RF-1 and RF-2. It binds guanine nucleotides and has strong preference for UGA stop codons. It may interact directly with the ribosome. The stimulation of RF-1 and RF-2 is significantly reduced by GTP and GDP, but not by GMP. In Staphylococcus aureus (strain JH1), this protein is Peptide chain release factor 3.